A 473-amino-acid chain; its full sequence is Cysteine--tRNA ligase (473 aa).

Cysteine 30 provides a ligand contact to Zn(2+). The short motif at 32 to 42 (MTVYDYCHIGH) is the 'HIGH' region element. The Zn(2+) site is built by cysteine 213, histidine 238, and glutamate 242. A 'KMSKS' region motif is present at residues 270–274 (KMSKS). Lysine 273 is an ATP binding site.

This sequence belongs to the class-I aminoacyl-tRNA synthetase family. In terms of assembly, monomer. Zn(2+) serves as cofactor.

The protein localises to the cytoplasm. It carries out the reaction tRNA(Cys) + L-cysteine + ATP = L-cysteinyl-tRNA(Cys) + AMP + diphosphate. The sequence is that of Cysteine--tRNA ligase from Acinetobacter baumannii (strain AB307-0294).